The following is a 176-amino-acid chain: MFKGTTIIAVRKGAKVSVAGDGQITFGENTILKHGAKKIRRLYNGEVIVGFAGSVADALTLSQKFEEKLEQYGGNLKRAAVELAQEWRKDKILRKLEALLIAVDKKDTLLISGTGEVIEPDEDVIGIGSGGNYAMAAALALRYNTDLDTEDIAKKALEIASKICVYTNNNITVETL.

Thr-5 is an active-site residue. Residues Ser-161, Cys-164, and Thr-167 each coordinate Na(+).

It belongs to the peptidase T1B family. HslV subfamily. A double ring-shaped homohexamer of HslV is capped on each side by a ring-shaped HslU homohexamer. The assembly of the HslU/HslV complex is dependent on binding of ATP.

It localises to the cytoplasm. The catalysed reaction is ATP-dependent cleavage of peptide bonds with broad specificity.. With respect to regulation, allosterically activated by HslU binding. In terms of biological role, protease subunit of a proteasome-like degradation complex believed to be a general protein degrading machinery. This is ATP-dependent protease subunit HslV from Thermoanaerobacter sp. (strain X514).